An 84-amino-acid polypeptide reads, in one-letter code: MKQEIQKGDVATLSFEQALKQLEVIVENLERGDVPLEQSIDIYERGEALKKHCEKLLKAAEAKVEKIQLSEGGTPEGVEPLDSE.

It belongs to the XseB family. As to quaternary structure, heterooligomer composed of large and small subunits.

It localises to the cytoplasm. The catalysed reaction is Exonucleolytic cleavage in either 5'- to 3'- or 3'- to 5'-direction to yield nucleoside 5'-phosphates.. Functionally, bidirectionally degrades single-stranded DNA into large acid-insoluble oligonucleotides, which are then degraded further into small acid-soluble oligonucleotides. The chain is Exodeoxyribonuclease 7 small subunit from Bartonella henselae (strain ATCC 49882 / DSM 28221 / CCUG 30454 / Houston 1) (Rochalimaea henselae).